The following is a 192-amino-acid chain: MIRFEIHGDNLTITDAIRNYIEDKIGKLERYFNDVPNAVAHVKVKTYQNSTTKIEVTIPLKNVTLRAEERHDDLYAGIDLVTSKLERQVRKYKTRVNRKHKTHGEPEAFVAEVQEAPPENVDDVNAEPTNDSEIEIIRSKQFSLKPMDSEEAVLQMELLGHDFYIFTDRETDGTSIVYKRKDGKYGLIETTE.

Residues 95-129 (RVNRKHKTHGEPEAFVAEVQEAPPENVDDVNAEPT) form a disordered region. Acidic residues predominate over residues 120-129 (NVDDVNAEPT).

Belongs to the HPF/YfiA ribosome-associated protein family. Long HPF subfamily. In terms of assembly, interacts with 100S ribosomes.

It localises to the cytoplasm. In terms of biological role, required for dimerization of active 70S ribosomes into 100S ribosomes in stationary phase; 100S ribosomes are translationally inactive and sometimes present during exponential growth. The chain is Ribosome hibernation promotion factor from Staphylococcus haemolyticus (strain JCSC1435).